We begin with the raw amino-acid sequence, 697 residues long: MRSGWVAGRIGIDDVAPVVSCGRYPAKAVVGEVVPVRATVWREGHDAVSATLVVRYLGTEFPRLASGPGTTPPAVPLGTVVQPGKRVKPQILQMSKGRTPDVFHGEFTPDAVGLWTFRVDGWGDPIATWRHAVEAKLEAGQSETELNNDLLVGARLLMRAAEGVPRKLRDPLLEAAQQLRTPGDPYQRAGGALSPEVADLLLQYPLREFVTRGEVHGVWVDRPLARFSSWYEMFPRSTGGWDENGHPVHGTFATAAAALPRIARMGFNVVYLPPIHPIGKVHRKGRNNSVTAAPGDVGSPWAIGSDEGGHDAVHPDLGTIDDFDAFVAAARDAGLEVALDLALQCAPDHPWAKEHPEWFTVLPDGTIAYAENPPKKYQDIYPLNFDNDPDGLFHEVLRVVKFWISHGVKVFRVDNPHTKPPNFWAWLIAEVKNEDPDILFLSEAFTRPARLYGLAKLGFTQSYTYFTWRTAKWELTEFGEEIAKYADHARPNLWVNTPDILHESLQHGGPGMFAIRAVLASTMSSSWGVYSGYELFEHRSVREGSEEYLDSEKYELRPRDFDGALARGESLEPFLTRLNEIRRLHPALRQLRTIKFHHLDNDALLAYSKFDPVTGDTVLVVVTLNPFGPEESTLWLDMEALGMEPYDRFWVRDEITGEEYQWGQSNYVRIEPAKAVAHVLNMPLIPYEKRLDLLRRE.

Lys284 serves as a coordination point for alpha-maltose 1-phosphate. Residues Arg286 to Ser305 are disordered. Positions 344 and 379 each coordinate alpha-maltose 1-phosphate. The active-site Nucleophile is Asp414. Asn415 serves as a coordination point for alpha-maltose 1-phosphate. The Proton donor role is filled by Glu443. Lys553–Tyr554 contacts alpha-maltose 1-phosphate.

It belongs to the glycosyl hydrolase 13 family. GlgE subfamily. Homodimer.

It catalyses the reaction alpha-maltose 1-phosphate + [(1-&gt;4)-alpha-D-glucosyl](n) = [(1-&gt;4)-alpha-D-glucosyl](n+2) + phosphate. The protein operates within glycan biosynthesis; glycogen biosynthesis. Its activity is regulated as follows. The transfer reaction from maltose-1-P to glycogen is inhibited by micromolar amounts of inorganic phosphate or arsenate but is only slightly inhibited by millimolar concentrations of glucose-1-P, glucose-6-P, or inorganic pyrophosphate. Is also inhibited by ATP, by 1,4-dideoxy-1,4-imino-D-arabinitol (DIA), but not by isofagomine. In terms of biological role, maltosyltransferase that uses maltose 1-phosphate (M1P) as the sugar donor to elongate linear or branched alpha-(1-&gt;4)-glucans. Is also able to catalyze the reverse reaction in vitro. Cannot use glucose 1-phosphate as substrate. Is involved in a branched alpha-glucan biosynthetic pathway from trehalose, together with TreS, Mak and GlgB. The polypeptide is Alpha-1,4-glucan:maltose-1-phosphate maltosyltransferase (glgE) (Mycolicibacterium smegmatis (strain ATCC 700084 / mc(2)155) (Mycobacterium smegmatis)).